A 246-amino-acid chain; its full sequence is 3-deoxy-manno-octulosonate cytidylyltransferase (246 aa).

It belongs to the KdsB family.

It is found in the cytoplasm. The enzyme catalyses 3-deoxy-alpha-D-manno-oct-2-ulosonate + CTP = CMP-3-deoxy-beta-D-manno-octulosonate + diphosphate. It functions in the pathway nucleotide-sugar biosynthesis; CMP-3-deoxy-D-manno-octulosonate biosynthesis; CMP-3-deoxy-D-manno-octulosonate from 3-deoxy-D-manno-octulosonate and CTP: step 1/1. Its pathway is bacterial outer membrane biogenesis; lipopolysaccharide biosynthesis. In terms of biological role, activates KDO (a required 8-carbon sugar) for incorporation into bacterial lipopolysaccharide in Gram-negative bacteria. In Rickettsia felis (strain ATCC VR-1525 / URRWXCal2) (Rickettsia azadi), this protein is 3-deoxy-manno-octulosonate cytidylyltransferase.